The following is a 217-amino-acid chain: Protein-L-isoaspartate O-methyltransferase (217 aa).

The active site involves Ser67.

This sequence belongs to the methyltransferase superfamily. L-isoaspartyl/D-aspartyl protein methyltransferase family.

The protein resides in the cytoplasm. It carries out the reaction [protein]-L-isoaspartate + S-adenosyl-L-methionine = [protein]-L-isoaspartate alpha-methyl ester + S-adenosyl-L-homocysteine. Its function is as follows. Catalyzes the methyl esterification of L-isoaspartyl residues in peptides and proteins that result from spontaneous decomposition of normal L-aspartyl and L-asparaginyl residues. It plays a role in the repair and/or degradation of damaged proteins. This chain is Protein-L-isoaspartate O-methyltransferase, found in Azoarcus sp. (strain BH72).